Consider the following 390-residue polypeptide: MTQIATENPSTKSVSNKTDRKKGLSIFILLLLIIGIACALYWFFFLKDFEETEDAYVGGNQVMVSSQVAGNVAKINADNMDKVHAGDILVELDDTNAKLSFEQAKSNLANAVRQVEQLGFTVQQLQSAVHANEISLAQAQGNLARRVQLEKMGAIDKESFQHAKEAVELAKANLNASKNQLAANQALLRNVPLREQPQIQNAINSLKQAWLNLQRTKIRSPIDGYVARRNVQVGQAVSVGGALMAVVSNEQMWLEANFKETQLTNMRIGQPVKIHFDLYGKNKEFDGVINGIEMGTGNAFSLLPSQNATGNWIKVVQRVPVRIKLDPQQFTETPLRIGLSATAKVRISDSSGAMLREKTEPKTLFSTDTLKYDESAVENLIESIIQQNSH.

At 1–25 (MTQIATENPSTKSVSNKTDRKKGLS) the chain is on the cytoplasmic side. Residues 26–46 (IFILLLLIIGIACALYWFFFL) traverse the membrane as a helical segment. Residues 47–390 (KDFEETEDAY…IESIIQQNSH (344 aa)) lie on the Periplasmic side of the membrane. The stretch at 160–190 (FQHAKEAVELAKANLNASKNQLAANQALLRN) forms a coiled coil.

It belongs to the membrane fusion protein (MFP) (TC 8.A.1) family.

The protein resides in the cell inner membrane. Confers resistance to antibiotics. The sequence is that of Multidrug export protein EmrA (emrA) from Haemophilus influenzae (strain ATCC 51907 / DSM 11121 / KW20 / Rd).